The primary structure comprises 800 residues: Kolavenyl diphosphate synthase TPS5, chloroplastic (800 aa).

A chloroplast-targeting transit peptide spans methionine 1–aspartate 75. Position 244 (lysine 244) interacts with substrate. Residues aspartate 375 and aspartate 377 each contribute to the Mg(2+) site. The DXDD motif motif lies at aspartate 375–aspartate 378. Lysine 461 provides a ligand contact to substrate.

This sequence belongs to the terpene synthase family. Mg(2+) serves as cofactor. Mostly expressed in trichomes of leaves and fruits.

It is found in the plastid. It localises to the chloroplast. It catalyses the reaction (2E,6E,10E)-geranylgeranyl diphosphate = (+)-kolavenyl diphosphate. It participates in secondary metabolite biosynthesis; terpenoid biosynthesis. In terms of biological role, involved in the biosynthesis of labdane-type diterpenoid including cleroda-dienols, and peregrinol lactones and furan derivatives, dopaminergic diterpenoids that can bind to dopamine receptors in the human pituitary gland, have probably ability to lower prolactin levels, and are used to treat menstrual cycle disorders (e.g. premenstrual syndrome and mastodynia). Terpene synthase that produces kolavenyl diphosphate from geranylgeranyl diphosphate (GGPP). The polypeptide is Kolavenyl diphosphate synthase TPS5, chloroplastic (Vitex agnus-castus (Chaste tree)).